Consider the following 412-residue polypeptide: MPKIVVIGAGIAGVSTAYALLEQGYDVTVVERRRYAAMETSFANGGQLSASNAEVWNHWSTVLKGIKWMLRRDAPLLMNPTPSWHKYSWLLEFVSNISRYRENTIETTRLAIAARKHLFEIADREGIDFDHVRRGILHVYWDKDGFDHALKVNEMLNEGGLDRRSVTPSEFAGIEPALHGKFYGGFYTPSDSTGDIHKYCAGLEKACTKRGAQFIYDAAVTRIERRDRFNIVCATDGADQTLVADGIVVCAGTNSRDIAAMFGDRINIYPVKGYSITVELDGAAADSSAPWVSILDDRAKIVTSRLGAARLRVAGTAEFNGVNFDIREDRIRPLVDWTRMMFPKVATEHVVPWAGLRPMMPNMMPRVGKSRVPGVFYNTGHGHLGWTLSAATSAMLATVVATDLPIDARLAA.

Position 4-18 (4-18 (IVVIGAGIAGVSTAY)) interacts with FAD.

It belongs to the DadA oxidoreductase family. It depends on FAD as a cofactor.

It catalyses the reaction a D-alpha-amino acid + A + H2O = a 2-oxocarboxylate + AH2 + NH4(+). Oxidative deamination of D-amino acids. In Mesorhizobium japonicum (strain LMG 29417 / CECT 9101 / MAFF 303099) (Mesorhizobium loti (strain MAFF 303099)), this protein is D-amino acid dehydrogenase 3 (dadA3).